The primary structure comprises 421 residues: Tyrosine-protein phosphatase non-receptor type 20 (421 aa).

The tract at residues 1-58 is disordered; it reads MSSPGNVRQKHGRDNDEHEGDSDDLNLQKSLPSSSQQKTPTKPVFGNKVNSESVKTSH. Low complexity predominate over residues 27-41; that stretch reads LQKSLPSSSQQKTPT. Positions 48-58 are enriched in polar residues; that stretch reads KVNSESVKTSH. Phosphoserine is present on S76. The tract at residues 93–116 is disordered; sequence RWSSVDPESAGPSKTVSTVLSESS. Residues 104 to 116 show a composition bias toward polar residues; the sequence is PSKTVSTVLSESS. Phosphoserine is present on S122. The 254-residue stretch at 160-413 folds into the Tyrosine-protein phosphatase domain; sequence IIREFLELEE…QFCYEIVLEV (254 aa). Residues D324, 354 to 360, and Q398 each bind substrate; that span reads CSAGVGR. The Phosphocysteine intermediate role is filled by C354.

Belongs to the protein-tyrosine phosphatase family. Non-receptor class subfamily.

It localises to the nucleus. The protein localises to the cytoplasm. The protein resides in the cytoskeleton. Its subcellular location is the microtubule organizing center. It is found in the centrosome. The enzyme catalyses O-phospho-L-tyrosyl-[protein] + H2O = L-tyrosyl-[protein] + phosphate. Tyrosine-protein phosphatase targeted to sites of actin polymerization in response of varied extracellular stimuli. Has tyrosine phosphatase activity towards various tyrosyl phosphorylated substrates. The sequence is that of Tyrosine-protein phosphatase non-receptor type 20 (Ptpn20) from Rattus norvegicus (Rat).